Here is a 257-residue protein sequence, read N- to C-terminus: Homeobox protein EMX1 (257 aa).

Residues proline 159 to lysine 218 constitute a DNA-binding region (homeobox). The disordered stretch occupies residues arginine 216 to aspartate 257. Residues glutamine 217 to lysine 230 show a composition bias toward basic and acidic residues.

This sequence belongs to the EMX homeobox family. In terms of assembly, interacts with WRD11 (via the N-terminal and the central portion of the protein); the interaction associates EMX1 with GLI3. As to expression, cerebral cortex. Expressed in the olfactory bulbs.

It is found in the nucleus. Functionally, transcription factor, which in cooperation with EMX2, acts to generate the boundary between the roof and archipallium in the developing brain. May function in combinations with OTX1/2 to specify cell fates in the developing central nervous system. In Mus musculus (Mouse), this protein is Homeobox protein EMX1 (Emx1).